The following is a 348-amino-acid chain: MDDNKKKALAAALGQIEKQFGKGSIMKLGDNRTMDVETVSTGSLSLDIALGAGGLPMGRIVEIFGPESSGKTTLTLELIAAAQREGKTCAFIDAEHALDPVYAKKLGVNIDELLVSQPDTGEQALEICDALARSGAVDVMVIDSVAALTPKAEIEGEMGDSHMGLQARMLSQAMRKLTGNLKQSNCMAIFINQIRMKIGVMFGNPETTTGGNALKFYASVRLDIRRTGAVKDGDEVVGNETRIKVVKNKIAAPFKQAETQIMYGQGFNREGELIDLGVKHKLVDKAGAWYSYNGDKIGQGKANASKFMRENTEVAAELDKKLREMLLTPAEEKPETDAAPEIEENEEF.

65-72 (GPESSGKT) serves as a coordination point for ATP. Residues 326–336 (LLTPAEEKPET) show a composition bias toward basic and acidic residues. Residues 326-348 (LLTPAEEKPETDAAPEIEENEEF) form a disordered region. Over residues 338–348 (AAPEIEENEEF) the composition is skewed to acidic residues.

The protein belongs to the RecA family.

It localises to the cytoplasm. In terms of biological role, can catalyze the hydrolysis of ATP in the presence of single-stranded DNA, the ATP-dependent uptake of single-stranded DNA by duplex DNA, and the ATP-dependent hybridization of homologous single-stranded DNAs. It interacts with LexA causing its activation and leading to its autocatalytic cleavage. This Aliivibrio fischeri (strain ATCC 700601 / ES114) (Vibrio fischeri) protein is Protein RecA.